Consider the following 500-residue polypeptide: Aspartyl/glutamyl-tRNA(Asn/Gln) amidotransferase subunit B (500 aa).

This sequence belongs to the GatB/GatE family. GatB subfamily. In terms of assembly, heterotrimer of A, B and C subunits.

The enzyme catalyses L-glutamyl-tRNA(Gln) + L-glutamine + ATP + H2O = L-glutaminyl-tRNA(Gln) + L-glutamate + ADP + phosphate + H(+). It catalyses the reaction L-aspartyl-tRNA(Asn) + L-glutamine + ATP + H2O = L-asparaginyl-tRNA(Asn) + L-glutamate + ADP + phosphate + 2 H(+). Allows the formation of correctly charged Asn-tRNA(Asn) or Gln-tRNA(Gln) through the transamidation of misacylated Asp-tRNA(Asn) or Glu-tRNA(Gln) in organisms which lack either or both of asparaginyl-tRNA or glutaminyl-tRNA synthetases. The reaction takes place in the presence of glutamine and ATP through an activated phospho-Asp-tRNA(Asn) or phospho-Glu-tRNA(Gln). In Brucella ovis (strain ATCC 25840 / 63/290 / NCTC 10512), this protein is Aspartyl/glutamyl-tRNA(Asn/Gln) amidotransferase subunit B.